The sequence spans 591 residues: V-type ATP synthase alpha chain (591 aa).

Residue 231 to 238 (GPFGSGKT) coordinates ATP.

It belongs to the ATPase alpha/beta chains family.

It catalyses the reaction ATP + H2O + 4 H(+)(in) = ADP + phosphate + 5 H(+)(out). Functionally, produces ATP from ADP in the presence of a proton gradient across the membrane. The V-type alpha chain is a catalytic subunit. This is V-type ATP synthase alpha chain from Clostridium novyi (strain NT).